The primary structure comprises 304 residues: N-acetyl-D-glucosamine kinase (304 aa).

ATP-binding positions include 4–11 and 133–140; these read GFDMGGTK and GLGGGLVI. Positions 157, 177, 179, and 184 each coordinate Zn(2+).

The protein belongs to the ROK (NagC/XylR) family. NagK subfamily.

It carries out the reaction N-acetyl-D-glucosamine + ATP = N-acetyl-D-glucosamine 6-phosphate + ADP + H(+). It participates in cell wall biogenesis; peptidoglycan recycling. Its function is as follows. Catalyzes the phosphorylation of N-acetyl-D-glucosamine (GlcNAc) derived from cell-wall degradation, yielding GlcNAc-6-P. The protein is N-acetyl-D-glucosamine kinase of Pectobacterium atrosepticum (strain SCRI 1043 / ATCC BAA-672) (Erwinia carotovora subsp. atroseptica).